We begin with the raw amino-acid sequence, 412 residues long: Divalent metal cation transporter MntH (412 aa).

Over 1 to 19 (MTNYRVESSSGRAARKMRL) the chain is Cytoplasmic. The helical transmembrane segment at 20-39 (ALMGPAFIAAIGYIDPGNFA) threads the bilayer. Topologically, residues 40-51 (TNIQAGASFGYQ) are periplasmic. The helical transmembrane segment at 52 to 71 (LLWVVVWANLMAMLIQILSA) threads the bilayer. Residues 72 to 95 (KLGIATGKNLAEQIRDHYPRPVVW) lie on the Cytoplasmic side of the membrane. A helical transmembrane segment spans residues 96–118 (FYWVQAEIIAMATDLAEFIGAAI). Residues 119–125 (GFKLILG) are Periplasmic-facing. The chain crosses the membrane as a helical span at residues 126–145 (VSLLQGAVLTGIATFLILML). The Cytoplasmic portion of the chain corresponds to 146–155 (QRRGQKPLEK). A helical transmembrane segment spans residues 156–175 (VIGGLLLFVAAAYIVELIFS). Residues 176-196 (QPNLAQLGKGMVIPSLPTSEA) lie on the Periplasmic side of the membrane. Residues 197–220 (VFLAAGVLGATIMPHVIYLHSSLT) form a helical membrane-spanning segment. The Cytoplasmic segment spans residues 221–238 (QHLHGGSRQQRYSATKWD). A helical membrane pass occupies residues 239 to 258 (VAIAMTIAGFVNLVMMATAA). Residues 259-276 (AAFHFSGHTGVADLDEAY) are Periplasmic-facing. Residues 277–297 (LTLQPLLSHAAATVFGLSLVA) traverse the membrane as a helical segment. Residues 298–327 (AGLSSTVVGTLAGQVVMQGFIRFHIPLWVR) lie on the Cytoplasmic side of the membrane. Residues 328-344 (RTVTMLPSFIVILMGLD) form a helical membrane-spanning segment. Over 345-350 (PTRILV) the chain is Periplasmic. The helical transmembrane segment at 351-370 (MSQVLLSFGIALALVPLLIF) threads the bilayer. Topologically, residues 371–387 (TSDSKLMGDLVNSKRVK) are cytoplasmic. Residues 388–406 (QTGWVIVVLVVALNIWLLV) traverse the membrane as a helical segment. Residues 407-412 (GTALGL) lie on the Periplasmic side of the membrane.

This sequence belongs to the NRAMP family.

Its subcellular location is the cell inner membrane. In terms of biological role, h(+)-stimulated, divalent metal cation uptake system. This Shigella flexneri serotype 5b (strain 8401) protein is Divalent metal cation transporter MntH.